Consider the following 356-residue polypeptide: Carminomycin 4-O-methyltransferase DnrK (356 aa).

R153 contributes to the S-adenosyl-L-methionine binding site. D163 is a binding site for substrate. Residues G187, E210, 237 to 238 (DF), and S252 contribute to the S-adenosyl-L-methionine site. The substrate site is built by N257 and R303.

The protein belongs to the class I-like SAM-binding methyltransferase superfamily. Cation-independent O-methyltransferase family. Homodimer and homotetramer in equilibrium.

It carries out the reaction carminomycin + S-adenosyl-L-methionine = daunorubicin + S-adenosyl-L-homocysteine + H(+). It functions in the pathway antibiotic biosynthesis; daunorubicin biosynthesis. Its pathway is antibiotic biosynthesis; carminomycin biosynthesis. Involved in the biosynthesis of the anthracyclines carminomycin and daunorubicin (daunomycin) which are aromatic polyketide antibiotics that exhibit high cytotoxicity and are widely applied in the chemotherapy of a variety of cancers. In vivo, catalyzes the transfer of a methyl group from S-adenosyl-L-methionine to the 4-O-position of carminomycin to form daunorubicin. In vitro, it also methylates the anthracyclines rhodomycin D (10-carbomethoxy-13-deoxycarminomycin) and 13-deoxy-carminomycin at the 4-hydroxyl position. It is quite specific with respect to the length of the carbohydrate chain at the C7 position, but it can accept substrates with bulky substituent at C10 position. The protein is Carminomycin 4-O-methyltransferase DnrK (dnrK) of Streptomyces peucetius.